The following is a 205-amino-acid chain: MDKILTAADAALRTLFAQPSAAERSPAAGIAEGELTEAQRRLSGALMRVNHVGEVCAQALYNAQAMVTRDMVLREHLLEAAREETDHLAWTRDRLNALGDRPSLLNPLWFAGAFAIGVVAAKISDAASLGFVVETEEQVSAHLESHLGLLPEEDRASLAVVARMKDDEERHAAAAREAGALQLPPPARALMRLAAKVMTTTAHRI.

Fe cation contacts are provided by Glu-54, Glu-84, His-87, Glu-136, Glu-168, and His-171.

Belongs to the COQ7 family. The cofactor is Fe cation.

The protein localises to the cell membrane. The catalysed reaction is a 5-methoxy-2-methyl-3-(all-trans-polyprenyl)benzene-1,4-diol + AH2 + O2 = a 3-demethylubiquinol + A + H2O. It participates in cofactor biosynthesis; ubiquinone biosynthesis. Catalyzes the hydroxylation of 2-nonaprenyl-3-methyl-6-methoxy-1,4-benzoquinol during ubiquinone biosynthesis. This Delftia acidovorans (strain DSM 14801 / SPH-1) protein is 3-demethoxyubiquinol 3-hydroxylase.